A 952-amino-acid chain; its full sequence is Lysosomal alpha-glucosidase (952 aa).

The first 27 residues, 1-27, serve as a signal peptide directing secretion; it reads MRVRHPPCSRRLLAICALVSLATAALL. A propeptide spanning residues 28 to 69 is cleaved from the precursor; the sequence is GHILLHDFLLVPRELSGSSPVLEETHPAHQQGASRPGPRDAQ. Residues 47-80 are disordered; the sequence is PVLEETHPAHQQGASRPGPRDAQAHLGRPRAVPT. Positions 80-131 constitute a P-type domain; that stretch reads TQCDVPPNSRFDCAPDKAITREQCDARGCCYIPAKQGLRGAQMGQPWCFFPP. 3 disulfides stabilise this stretch: Cys82/Cys109, Cys92/Cys108, and Cys103/Cys127. N-linked (GlcNAc...) asparagine glycosylation is found at Asn140, Asn233, and Asn390. Residue Asp404 participates in substrate binding. Asn470 carries an N-linked (GlcNAc...) asparagine glycan. Asp518 (nucleophile) is an active-site residue. The active site involves Glu521. Cys533 and Cys558 are joined by a disulfide. Residues Arg600 and Asp616 each contribute to the substrate site. Cys647 and Cys658 are disulfide-bonded. The N-linked (GlcNAc...) asparagine glycan is linked to Asn652. His674 lines the substrate pocket. Asn882 and Asn925 each carry an N-linked (GlcNAc...) asparagine glycan.

Belongs to the glycosyl hydrolase 31 family.

It localises to the lysosome. The protein localises to the lysosome membrane. It carries out the reaction Hydrolysis of terminal, non-reducing (1-&gt;4)-linked alpha-D-glucose residues with release of alpha-D-glucose.. In terms of biological role, essential for the degradation of glycogen in lysosomes. Has highest activity on alpha-1,4-linked glycosidic linkages, but can also hydrolyze alpha-1,6-linked glucans. This is Lysosomal alpha-glucosidase (GAA) from Pongo abelii (Sumatran orangutan).